A 230-amino-acid chain; its full sequence is MTATPSDDRKYRHQRERLVETLRERGIHDERVLSAVGAVARHAFVDPALRDRAYADEALPIGLNQTISQPFTVAYQTALLGVQPDDRILEVGTGSGFQAAVLCEMGARVYSIERHDDLLRRARSVLDGLGYDVRTRHGDGTRGWPAFAPYDGIVVTAGAPEIPAPLLHQLREPSGEDDGPGGRLVIPIGGREGQTMTRVRRTGSGPHDYEQEEFHSFRFVPLVDEDEGGG.

Ser68 is a catalytic residue.

It belongs to the methyltransferase superfamily. L-isoaspartyl/D-aspartyl protein methyltransferase family.

It localises to the cytoplasm. It carries out the reaction [protein]-L-isoaspartate + S-adenosyl-L-methionine = [protein]-L-isoaspartate alpha-methyl ester + S-adenosyl-L-homocysteine. Catalyzes the methyl esterification of L-isoaspartyl residues in peptides and proteins that result from spontaneous decomposition of normal L-aspartyl and L-asparaginyl residues. It plays a role in the repair and/or degradation of damaged proteins. The chain is Protein-L-isoaspartate O-methyltransferase from Salinibacter ruber (strain DSM 13855 / M31).